The chain runs to 220 residues: Adenylate kinase (220 aa).

G10–T15 lines the ATP pocket. The NMP stretch occupies residues S30–I59. Residues S31, R36, D57 to I59, G83 to R86, and Q90 each bind AMP. An LID region spans residues G124 to D161. R125 serves as a coordination point for ATP. Zn(2+) contacts are provided by C128 and C131. V134–Y135 serves as a coordination point for ATP. C148 and C151 together coordinate Zn(2+). The AMP site is built by R158 and R169. Residue G197 participates in ATP binding.

It belongs to the adenylate kinase family. As to quaternary structure, monomer.

It localises to the cytoplasm. The catalysed reaction is AMP + ATP = 2 ADP. It functions in the pathway purine metabolism; AMP biosynthesis via salvage pathway; AMP from ADP: step 1/1. Functionally, catalyzes the reversible transfer of the terminal phosphate group between ATP and AMP. Plays an important role in cellular energy homeostasis and in adenine nucleotide metabolism. The sequence is that of Adenylate kinase from Pyrococcus horikoshii (strain ATCC 700860 / DSM 12428 / JCM 9974 / NBRC 100139 / OT-3).